Here is a 140-residue protein sequence, read N- to C-terminus: Probable prefoldin subunit 6 (140 aa).

This sequence belongs to the prefoldin subunit beta family. As to quaternary structure, heterohexamer of two PFD-alpha type and four PFD-beta type subunits.

Its function is as follows. Binds specifically to cytosolic chaperonin (c-CPN) and transfers target proteins to it. Binds to nascent polypeptide chain and promotes folding in an environment in which there are many competing pathways for nonnative proteins. The sequence is that of Probable prefoldin subunit 6 (pfdn6) from Dictyostelium discoideum (Social amoeba).